Reading from the N-terminus, the 479-residue chain is mRNA export factor ICP27 homolog (479 aa).

Positions 1–15 (MVPSQRLSRTSSISS) are enriched in low complexity. 2 disordered regions span residues 1–77 (MVPS…PSSV) and 91–210 (KKWD…NKPW). Residues 35 to 44 (TDCDMDPMEG) show a composition bias toward acidic residues. The span at 132–142 (EVHGCTDESYG) shows a compositional bias: basic and acidic residues. Residues cysteine 354, histidine 445, cysteine 449, and cysteine 454 each contribute to the Zn(2+) site. The CHC2-type zinc-finger motif lies at 354–454 (CFLPNTRDYN…HTRDCRSASC (101 aa)).

It belongs to the HHV-1 ICP27 protein family. Interacts with host XPO1 and with the XPO1 export pathway components small GTPase RAN and nucleoporin NUP214. Interacts with host SPEN, OTT1 and OTT3. Interacts with host SRSF1, SRSF3, SRSF7 and SRPK1. Interacts with host DHX9; this interaction may have an inhibitory effect on virion production. Interacts (via N-terminus) with host NXF1; this interaction plays a role in mRNA export. Phosphorylated by cellular protein kinase CK2.

It localises to the host nucleus. The protein resides in the host cytoplasm. Promotes the nuclear export of a subset of early and late viral mRNAs by interacting with mRNAs and cellular export proteins. Additionally may prevent the establishment of cellular antiviral state, by acting as an alternative splicing factor for cellular RNAs such as STAT1, resulting in a STAT1 mRNA incapable of producing the STAT1alpha isoform. The protein is mRNA export factor ICP27 homolog of Homo sapiens (Human).